The following is a 272-amino-acid chain: Small ribosomal subunit protein uS2 (272 aa).

The span at 224–233 shows a compositional bias: basic and acidic residues; the sequence is EGKKAREERQ. The segment at 224–272 is disordered; it reads EGKKAREERQLAAAKDAAGDAKPEAEEAPAAAEAEEAPAAEAEEAPAAE. The span at 256 to 272 shows a compositional bias: acidic residues; that stretch reads EAEEAPAAEAEEAPAAE.

This sequence belongs to the universal ribosomal protein uS2 family.

This Corynebacterium glutamicum (strain ATCC 13032 / DSM 20300 / JCM 1318 / BCRC 11384 / CCUG 27702 / LMG 3730 / NBRC 12168 / NCIMB 10025 / NRRL B-2784 / 534) protein is Small ribosomal subunit protein uS2.